We begin with the raw amino-acid sequence, 617 residues long: Probable Xaa-Pro aminopeptidase P (617 aa).

4 residues coordinate Mn(2+): D414, D425, E523, and E537.

It belongs to the peptidase M24B family. Requires Mn(2+) as cofactor.

The catalysed reaction is Release of any N-terminal amino acid, including proline, that is linked to proline, even from a dipeptide or tripeptide.. Catalyzes the removal of a penultimate prolyl residue from the N-termini of peptides. The polypeptide is Probable Xaa-Pro aminopeptidase P (AMPP) (Ajellomyces capsulatus (strain NAm1 / WU24) (Darling's disease fungus)).